Consider the following 1037-residue polypeptide: Probable serine/threonine-protein kinase KCC4 (1037 aa).

Positions 21-285 (WKLGETLGFG…IRDILSHPLL (265 aa)) constitute a Protein kinase domain. ATP-binding positions include 27-35 (LGFGSTGKV) and Lys50. The active-site Proton acceptor is the Asp152. The span at 372–387 (NKKNRNKIKKTKKNKR) shows a compositional bias: basic residues. The disordered stretch occupies residues 372 to 494 (NKKNRNKIKK…MPNTKRSSLT (123 aa)). Low complexity predominate over residues 388–404 (SSTLSSSSSLLLNNRSI). Ser396 carries the post-translational modification Phosphoserine. A compositionally biased stretch (basic residues) spans 408 to 427 (PRRRTSKRHSREFSSSRKRS). A compositionally biased stretch (polar residues) spans 453 to 465 (NVASANTQATPSG). The span at 469–480 (PHKRNSKKRSSK) shows a compositional bias: basic residues. The segment covering 481 to 494 (RLSYMPNTKRSSLT) has biased composition (low complexity). 6 positions are modified to phosphoserine: Ser675, Ser707, Ser777, Ser822, Ser825, and Ser871. Disordered regions lie at residues 746–804 (LIKE…DFPQ), 810–829 (QEYD…KSAE), and 861–918 (TLPS…TVKK). Residues 861–873 (TLPSLTSNNSSVG) show a composition bias toward polar residues. A compositionally biased stretch (basic and acidic residues) spans 879–888 (GAEKGTESEK).

Belongs to the protein kinase superfamily. CAMK Ser/Thr protein kinase family. NIM1 subfamily. As to quaternary structure, interacts with septin proteins, primarily with CDC11. Interacts with SWE1 and NAP1.

The protein resides in the bud neck. The enzyme catalyses L-seryl-[protein] + ATP = O-phospho-L-seryl-[protein] + ADP + H(+). It carries out the reaction L-threonyl-[protein] + ATP = O-phospho-L-threonyl-[protein] + ADP + H(+). Its function is as follows. Involved in regulation of bud growth during cell cycle and in septin organization. Plays a role in cell wall synthesis. The chain is Probable serine/threonine-protein kinase KCC4 (KCC4) from Saccharomyces cerevisiae (strain ATCC 204508 / S288c) (Baker's yeast).